A 352-amino-acid chain; its full sequence is Histidinol-phosphate aminotransferase (352 aa).

Residue K221 is modified to N6-(pyridoxal phosphate)lysine.

The protein belongs to the class-II pyridoxal-phosphate-dependent aminotransferase family. Histidinol-phosphate aminotransferase subfamily. In terms of assembly, homodimer. Pyridoxal 5'-phosphate serves as cofactor.

It carries out the reaction L-histidinol phosphate + 2-oxoglutarate = 3-(imidazol-4-yl)-2-oxopropyl phosphate + L-glutamate. The protein operates within amino-acid biosynthesis; L-histidine biosynthesis; L-histidine from 5-phospho-alpha-D-ribose 1-diphosphate: step 7/9. The polypeptide is Histidinol-phosphate aminotransferase (Staphylococcus aureus (strain bovine RF122 / ET3-1)).